The sequence spans 301 residues: MSMRIWSRSSSAYSAIARSSSWFNNSLFSSCLLRFYSNPPKKTKKNTLISLRKSAETANEKFIEKINKEHQLFKPGQIVVDLGCAPGIWSTIAARHVGLFGRVIACDIIPCRLPENSSMIQGNILSMEIQLEIAKAAIRSRNSFFRNQQDHNSASIPYLQSVFEEERDTKEKAKIEDLSADVIMSDLGPPFPMVQGFEFWISKLPYLAMQTNEHLAVKDELDSLYLAQAALLFAIKALKPDGIFLCKVLESSHLRSFAEDLSMCFKCVKKIQFKTKIKDELYAVYFCSGKQLSCHSKLLNI.

Residues glycine 87, tryptophan 89, aspartate 107, and aspartate 186 each coordinate S-adenosyl-L-methionine. The active-site Proton acceptor is the lysine 247.

It belongs to the class I-like SAM-binding methyltransferase superfamily. RNA methyltransferase RlmE family.

It carries out the reaction a uridine in rRNA + S-adenosyl-L-methionine = a 2'-O-methyluridine in rRNA + S-adenosyl-L-homocysteine + H(+). The polypeptide is Putative ribosomal RNA methyltransferase PB17E12.10c (Schizosaccharomyces pombe (strain 972 / ATCC 24843) (Fission yeast)).